We begin with the raw amino-acid sequence, 233 residues long: Lipoprotein-releasing system ATP-binding protein LolD (233 aa).

In terms of domain architecture, ABC transporter spans 6 to 233 (LQCDNLCKRY…TAELSLMGAE (228 aa)). Residue 42-49 (GSSGSGKS) coordinates ATP.

The protein belongs to the ABC transporter superfamily. Lipoprotein translocase (TC 3.A.1.125) family. The complex is composed of two ATP-binding proteins (LolD) and two transmembrane proteins (LolC and LolE).

It is found in the cell inner membrane. In terms of biological role, part of the ABC transporter complex LolCDE involved in the translocation of mature outer membrane-directed lipoproteins, from the inner membrane to the periplasmic chaperone, LolA. Responsible for the formation of the LolA-lipoprotein complex in an ATP-dependent manner. In Shigella dysenteriae serotype 1 (strain Sd197), this protein is Lipoprotein-releasing system ATP-binding protein LolD.